We begin with the raw amino-acid sequence, 361 residues long: Ribosomal RNA large subunit methyltransferase M (361 aa).

S-adenosyl-L-methionine-binding positions include serine 193, 226 to 229 (CPGG), aspartate 245, aspartate 265, and aspartate 283. The active-site Proton acceptor is lysine 312.

This sequence belongs to the class I-like SAM-binding methyltransferase superfamily. RNA methyltransferase RlmE family. RlmM subfamily. In terms of assembly, monomer.

Its subcellular location is the cytoplasm. It carries out the reaction cytidine(2498) in 23S rRNA + S-adenosyl-L-methionine = 2'-O-methylcytidine(2498) in 23S rRNA + S-adenosyl-L-homocysteine + H(+). Its function is as follows. Catalyzes the 2'-O-methylation at nucleotide C2498 in 23S rRNA. The sequence is that of Ribosomal RNA large subunit methyltransferase M from Histophilus somni (strain 2336) (Haemophilus somnus).